Consider the following 211-residue polypeptide: LexA repressor (211 aa).

The H-T-H motif DNA-binding region spans 27-47 (QTEIARAFGFKGVRAVQHHLD). Catalysis depends on for autocatalytic cleavage activity residues S131 and K168.

Belongs to the peptidase S24 family. As to quaternary structure, homodimer.

It catalyses the reaction Hydrolysis of Ala-|-Gly bond in repressor LexA.. In terms of biological role, represses a number of genes involved in the response to DNA damage (SOS response), including recA and lexA. In the presence of single-stranded DNA, RecA interacts with LexA causing an autocatalytic cleavage which disrupts the DNA-binding part of LexA, leading to derepression of the SOS regulon and eventually DNA repair. This is LexA repressor from Xylella fastidiosa (strain M23).